Consider the following 484-residue polypeptide: Regulator of G-protein signaling 9 (484 aa).

Residues 30 to 105 (PDTGVKTQSQ…PDSSLYRFQT (76 aa)) form the DEP domain. Residues 219–280 (ITAVKKEIMY…ITDDTQFWDL (62 aa)) form the G protein gamma domain. One can recognise an RGS domain in the interval 299 to 414 (NFSELIRDPK…LKSPIYKEML (116 aa)).

Heterodimer with Gbeta5. Interacts with RGS7BP, leading to regulate the subcellular location of the heterodimer formed with Gbeta5. Component of the RGS9-1-Gbeta5 complex composed of RGS9 (RGS9-1), Gbeta5 (GNB5) and RGS9BP. In terms of processing, phosphorylation is decreased by light exposition.

The protein resides in the membrane. Inhibits signal transduction by increasing the GTPase activity of G protein alpha subunits thereby driving them into their inactive GDP-bound form. Binds to G(t)-alpha. Involved in phototransduction; key element in the recovery phase of visual transduction. The chain is Regulator of G-protein signaling 9 from Tamias striatus (Eastern chipmunk).